Here is a 63-residue protein sequence, read N- to C-terminus: Large ribosomal subunit protein bL35 (63 aa).

Belongs to the bacterial ribosomal protein bL35 family.

The polypeptide is Large ribosomal subunit protein bL35 (Campylobacter jejuni (strain RM1221)).